Here is a 206-residue protein sequence, read N- to C-terminus: Small ribosomal subunit protein uS4 (206 aa).

The 61-residue stretch at S96–A156 folds into the S4 RNA-binding domain.

It belongs to the universal ribosomal protein uS4 family. Part of the 30S ribosomal subunit. Contacts protein S5. The interaction surface between S4 and S5 is involved in control of translational fidelity.

One of the primary rRNA binding proteins, it binds directly to 16S rRNA where it nucleates assembly of the body of the 30S subunit. In terms of biological role, with S5 and S12 plays an important role in translational accuracy. In Laribacter hongkongensis (strain HLHK9), this protein is Small ribosomal subunit protein uS4.